The following is a 345-amino-acid chain: Beta-2-glycoprotein 1 (345 aa).

The first 19 residues, 1-19 (MISLGLILFSSVLCHVATA), serve as a signal peptide directing secretion. Sushi domains are found at residues 21–81 (RTCP…RCIP), 82–139 (RVCP…VCTR), 140–202 (VTCP…ECRE), and 203–262 (VKCP…SCKA). Disulfide bonds link Cys-23/Cys-66, Cys-51/Cys-79, Cys-84/Cys-124, Cys-110/Cys-137, Cys-142/Cys-188, Cys-174/Cys-200, Cys-205/Cys-248, Cys-234/Cys-260, Cys-264/Cys-315, Cys-300/Cys-325, and Cys-307/Cys-345. Thr-33 carries an O-linked (GalNAc...) threonine glycan. N-linked (GlcNAc...) asparagine glycosylation is found at Asn-117, Asn-162, Asn-183, and Asn-193. An N-linked (GlcNAc...) asparagine glycan is attached at Asn-253. A sushi-like region spans residues 263–345 (SCKLSVKKAT…KTDASDVKPC (83 aa)).

As to expression, expressed by the liver and secreted in plasma.

Its subcellular location is the secreted. Its function is as follows. Binds to various kinds of negatively charged substances such as heparin, phospholipids, and dextran sulfate. May prevent activation of the intrinsic blood coagulation cascade by binding to phospholipids on the surface of damaged cells. The protein is Beta-2-glycoprotein 1 (APOH) of Canis lupus familiaris (Dog).